We begin with the raw amino-acid sequence, 568 residues long: U6 small nuclear RNA (adenine-(43)-N(6))-methyltransferase (568 aa).

A disordered region spans residues 1 to 20 (MSEIDTNDIKKEMDNKNYRD). Residues 7–20 (NDIKKEMDNKNYRD) show a composition bias toward basic and acidic residues. S-adenosyl-L-methionine contacts are provided by R117, G151, D175, and N250. 3 disordered regions span residues 363–383 (KENN…INNN), 403–431 (NLDS…NNNN), and 503–538 (DPKI…NKNN). Low complexity-rich tracts occupy residues 365–383 (NNNI…INNN), 409–431 (NNNN…NNNN), and 507–538 (NNNN…NKNN).

It belongs to the methyltransferase superfamily. METTL16/RlmF family.

It catalyses the reaction adenosine in U6 snRNA + S-adenosyl-L-methionine = N(6)-methyladenosine in U6 snRNA + S-adenosyl-L-homocysteine + H(+). Its function is as follows. RNA N6-methyltransferase that mediates N6-methylation of adenine of U6 small nuclear RNA (U6 snRNA). The protein is U6 small nuclear RNA (adenine-(43)-N(6))-methyltransferase of Dictyostelium discoideum (Social amoeba).